The primary structure comprises 352 residues: Guanine nucleotide-binding protein alpha-7 subunit (352 aa).

Gly-2 carries N-myristoyl glycine lipidation. The S-palmitoyl cysteine moiety is linked to residue Cys-4. The G-alpha domain occupies 32–352; the sequence is RIIKLLLLGA…AKNLKSMGLC (321 aa). Residues 35–48 are G1 motif; it reads KLLLLGAGESGKST. GTP contacts are provided by residues 40-47, 174-180, 199-203, 268-271, and Ala-324; these read GAGESGKS, LRTRIKT, DVGGQ, and NKKD. Residues Ser-47 and Thr-180 each contribute to the Mg(2+) site. The G2 motif stretch occupies residues 172-180; sequence DLLRTRIKT. The G3 motif stretch occupies residues 195-204; that stretch reads FRVIDVGGQR. A G4 motif region spans residues 264-271; it reads ILFLNKKD. Residues 322–327 form a G5 motif region; the sequence is TCATDT.

This sequence belongs to the G-alpha family. G(i/o/t/z) subfamily. As to quaternary structure, g proteins are composed of 3 units; alpha, beta and gamma. The alpha chain contains the guanine nucleotide binding site.

Functionally, guanine nucleotide-binding proteins (G proteins) are involved as modulators or transducers in various transmembrane signaling systems. In Caenorhabditis elegans, this protein is Guanine nucleotide-binding protein alpha-7 subunit (gpa-7).